Reading from the N-terminus, the 140-residue chain is Large ribosomal subunit protein uL11 (140 aa).

It belongs to the universal ribosomal protein uL11 family. Part of the ribosomal stalk of the 50S ribosomal subunit. Interacts with L10 and the large rRNA to form the base of the stalk. L10 forms an elongated spine to which L12 dimers bind in a sequential fashion forming a multimeric L10(L12)X complex. One or more lysine residues are methylated.

In terms of biological role, forms part of the ribosomal stalk which helps the ribosome interact with GTP-bound translation factors. The sequence is that of Large ribosomal subunit protein uL11 from Thermoanaerobacter pseudethanolicus (strain ATCC 33223 / 39E) (Clostridium thermohydrosulfuricum).